The sequence spans 455 residues: Phosphoglycerate kinase, glycosomal (455 aa).

(2R)-3-phosphoglycerate is bound by residues valine 23, aspartate 24, phenylalanine 25, asparagine 26, arginine 39, serine 61, histidine 62, glycine 64, arginine 65, arginine 132, histidine 168, and arginine 169. ADP contacts are provided by glycine 214 and alanine 215. Glycine 214 lines the CDP pocket. Residues alanine 215 and lysine 216 each coordinate AMP. Alanine 215 provides a ligand contact to ATP. Alanine 215 contributes to the Mg(2+) binding site. Residue lysine 216 coordinates (2R)-3-phosphoglycerate. Position 219 (aspartate 219) interacts with CDP. Residue aspartate 219 participates in Mg(2+) binding. 2 residues coordinate ADP: lysine 220 and glycine 238. Lysine 220 provides a ligand contact to AMP. Lysine 220 is a binding site for ATP. Glycine 238 provides a ligand contact to CDP. Residues alanine 239 and alanine 311 each contribute to the AMP site. ATP-binding residues include alanine 239 and alanine 311. Residues alanine 311 and asparagine 335 each coordinate ADP. Glycine 336 and phenylalanine 341 together coordinate CDP. Positions 341, 342, 374, and 375 each coordinate ADP. Position 342 (glutamate 342) interacts with AMP. ATP contacts are provided by glutamate 342, aspartate 374, and threonine 375. Aspartate 374 is a Mg(2+) binding site. Residues aspartate 417–proline 455 are topogenic signal.

Belongs to the phosphoglycerate kinase family. As to quaternary structure, monomer. The cofactor is Mg(2+).

Its subcellular location is the glycosome. The catalysed reaction is (2R)-3-phosphoglycerate + ATP = (2R)-3-phospho-glyceroyl phosphate + ADP. The protein operates within carbohydrate degradation; glycolysis; pyruvate from D-glyceraldehyde 3-phosphate: step 2/5. This is Phosphoglycerate kinase, glycosomal (PGKC) from Crithidia fasciculata.